The following is a 103-amino-acid chain: Large ribosomal subunit protein uL24 (103 aa).

Belongs to the universal ribosomal protein uL24 family. As to quaternary structure, part of the 50S ribosomal subunit.

Functionally, one of two assembly initiator proteins, it binds directly to the 5'-end of the 23S rRNA, where it nucleates assembly of the 50S subunit. One of the proteins that surrounds the polypeptide exit tunnel on the outside of the subunit. In Haemophilus influenzae (strain ATCC 51907 / DSM 11121 / KW20 / Rd), this protein is Large ribosomal subunit protein uL24.